The sequence spans 316 residues: Ribosomal RNA small subunit methyltransferase H (316 aa).

S-adenosyl-L-methionine-binding positions include 35-37 (GGH), Asp-55, Phe-79, Asp-101, and Gln-108. Residues 291-316 (ALKPSDQEVELNPRSRSSVLRVAEKL) are disordered.

It belongs to the methyltransferase superfamily. RsmH family.

The protein localises to the cytoplasm. It carries out the reaction cytidine(1402) in 16S rRNA + S-adenosyl-L-methionine = N(4)-methylcytidine(1402) in 16S rRNA + S-adenosyl-L-homocysteine + H(+). Specifically methylates the N4 position of cytidine in position 1402 (C1402) of 16S rRNA. The chain is Ribosomal RNA small subunit methyltransferase H from Vibrio cholerae serotype O1 (strain ATCC 39315 / El Tor Inaba N16961).